The chain runs to 310 residues: Aspartate carbamoyltransferase catalytic subunit 3 (310 aa).

Carbamoyl phosphate is bound by residues R55 and T56. K85 lines the L-aspartate pocket. Carbamoyl phosphate is bound by residues R106, H134, and Q137. The L-aspartate site is built by R167 and R228. The carbamoyl phosphate site is built by L266 and P267.

The protein belongs to the aspartate/ornithine carbamoyltransferase superfamily. ATCase family. In terms of assembly, heterododecamer (2C3:3R2) of six catalytic PyrB chains organized as two trimers (C3), and six regulatory PyrI chains organized as three dimers (R2).

It carries out the reaction carbamoyl phosphate + L-aspartate = N-carbamoyl-L-aspartate + phosphate + H(+). The protein operates within pyrimidine metabolism; UMP biosynthesis via de novo pathway; (S)-dihydroorotate from bicarbonate: step 2/3. Functionally, catalyzes the condensation of carbamoyl phosphate and aspartate to form carbamoyl aspartate and inorganic phosphate, the committed step in the de novo pyrimidine nucleotide biosynthesis pathway. This chain is Aspartate carbamoyltransferase catalytic subunit 3, found in Shewanella halifaxensis (strain HAW-EB4).